The following is a 471-amino-acid chain: Cytolysin (471 aa).

The N-terminal stretch at 1 to 20 is a signal peptide; the sequence is MKKMTLFTLSLLATAVQVGA. In terms of domain architecture, Ricin B-type lectin spans 338–465; the sequence is AHVTLQSLSN…EANQARWKPT (128 aa).

This sequence belongs to the HlyA hemolysin family.

Its function is as follows. Bacterial hemolysins are exotoxins that attack blood cell membranes and cause cell rupture by mechanisms not clearly defined. The sequence is that of Cytolysin (vvhA) from Vibrio vulnificus (strain CMCP6).